The primary structure comprises 106 residues: MGKNNDWLNFEHLVKDKQIEALQPPSMYKVILNNDDYTPMEFVIDVLQKFFSYDIERATQLMLNVHYQGKAICGVFTAEVAETKVAHVNQYARENEHPLLCTLEKA.

It belongs to the ClpS family. Binds to the N-terminal domain of the chaperone ClpA.

In terms of biological role, involved in the modulation of the specificity of the ClpAP-mediated ATP-dependent protein degradation. The chain is ATP-dependent Clp protease adapter protein ClpS from Yersinia pestis bv. Antiqua (strain Antiqua).